Here is a 102-residue protein sequence, read N- to C-terminus: Small ribosomal subunit protein uS14 (102 aa).

The protein belongs to the universal ribosomal protein uS14 family. In terms of assembly, part of the 30S ribosomal subunit. Contacts proteins S3 and S10.

Functionally, binds 16S rRNA, required for the assembly of 30S particles and may also be responsible for determining the conformation of the 16S rRNA at the A site. The chain is Small ribosomal subunit protein uS14 from Dichelobacter nodosus (strain VCS1703A).